The chain runs to 417 residues: Gamma-glutamyl phosphate reductase (417 aa).

The protein belongs to the gamma-glutamyl phosphate reductase family.

It localises to the cytoplasm. It catalyses the reaction L-glutamate 5-semialdehyde + phosphate + NADP(+) = L-glutamyl 5-phosphate + NADPH + H(+). It functions in the pathway amino-acid biosynthesis; L-proline biosynthesis; L-glutamate 5-semialdehyde from L-glutamate: step 2/2. Catalyzes the NADPH-dependent reduction of L-glutamate 5-phosphate into L-glutamate 5-semialdehyde and phosphate. The product spontaneously undergoes cyclization to form 1-pyrroline-5-carboxylate. The polypeptide is Gamma-glutamyl phosphate reductase (Photorhabdus laumondii subsp. laumondii (strain DSM 15139 / CIP 105565 / TT01) (Photorhabdus luminescens subsp. laumondii)).